The chain runs to 278 residues: Cytoplasmic envelopment protein 1 (278 aa).

This sequence belongs to the herpesviridae cytoplasmic envelopment protein 1 family.

Its subcellular location is the virion. It is found in the virion tegument. The protein localises to the host cytoplasm. The protein resides in the host Golgi apparatus. Its function is as follows. Plays a critical role in cytoplasmic virus egress. Participates in the final step of tegumentation and envelope acquisition within the host cytoplasm. This Homo sapiens (Human) protein is Cytoplasmic envelopment protein 1 (ORF42).